A 342-amino-acid chain; its full sequence is tRNA N6-adenosine threonylcarbamoyltransferase (342 aa).

2 residues coordinate Fe cation: histidine 111 and histidine 115. Substrate-binding positions include 134-138, aspartate 167, glycine 180, and asparagine 277; that span reads LVSGG. Aspartate 305 is a Fe cation binding site.

It belongs to the KAE1 / TsaD family. Fe(2+) is required as a cofactor.

The protein resides in the cytoplasm. The catalysed reaction is L-threonylcarbamoyladenylate + adenosine(37) in tRNA = N(6)-L-threonylcarbamoyladenosine(37) in tRNA + AMP + H(+). Functionally, required for the formation of a threonylcarbamoyl group on adenosine at position 37 (t(6)A37) in tRNAs that read codons beginning with adenine. Is involved in the transfer of the threonylcarbamoyl moiety of threonylcarbamoyl-AMP (TC-AMP) to the N6 group of A37, together with TsaE and TsaB. TsaD likely plays a direct catalytic role in this reaction. The sequence is that of tRNA N6-adenosine threonylcarbamoyltransferase from Histophilus somni (strain 2336) (Haemophilus somnus).